Consider the following 378-residue polypeptide: Acetylornithine deacetylase (378 aa).

A Zn(2+)-binding site is contributed by His-76. The active site involves Asp-78. Residue Asp-108 coordinates Zn(2+). Residue Glu-140 is part of the active site. Zn(2+) is bound by residues Glu-141, Glu-165, and His-351.

This sequence belongs to the peptidase M20A family. ArgE subfamily. Homodimer. Zn(2+) serves as cofactor. It depends on Co(2+) as a cofactor. The cofactor is glutathione.

Its subcellular location is the cytoplasm. The enzyme catalyses N(2)-acetyl-L-ornithine + H2O = L-ornithine + acetate. It functions in the pathway amino-acid biosynthesis; L-arginine biosynthesis; L-ornithine from N(2)-acetyl-L-ornithine (linear): step 1/1. In terms of biological role, catalyzes the hydrolysis of the amide bond of N(2)-acetylated L-amino acids. Cleaves the acetyl group from N-acetyl-L-ornithine to form L-ornithine, an intermediate in L-arginine biosynthesis pathway, and a branchpoint in the synthesis of polyamines. This chain is Acetylornithine deacetylase, found in Vibrio cholerae serotype O1 (strain ATCC 39541 / Classical Ogawa 395 / O395).